The following is a 435-amino-acid chain: Secreted RxLR effector protein 35 (435 aa).

The N-terminal stretch at methionine 1–glycine 22 is a signal peptide. Positions arginine 48 to arginine 65 match the RxLR-dEER motif. The disordered stretch occupies residues arginine 336 to threonine 357. The segment covering aspartate 342–proline 354 has biased composition (polar residues).

This sequence belongs to the RxLR effector family.

It localises to the secreted. It is found in the host nucleus. Its function is as follows. Secreted effector that acts as an elicitor that induces cell death in host plant cells. The chain is Secreted RxLR effector protein 35 from Plasmopara viticola (Downy mildew of grapevine).